The chain runs to 182 residues: Carbonic anhydrase (182 aa).

Positions 64, 81, and 86 each coordinate Mg(2+).

This sequence belongs to the gamma-class carbonic anhydrase family. Homotrimer. It depends on Mg(2+) as a cofactor. Requires Zn(2+) as cofactor.

It catalyses the reaction hydrogencarbonate + H(+) = CO2 + H2O. Its function is as follows. Reversible hydration of carbon dioxide. In Geobacillus kaustophilus (strain HTA426), this protein is Carbonic anhydrase.